A 342-amino-acid chain; its full sequence is NADH-ubiquinone oxidoreductase chain 2 (342 aa).

9 helical membrane passes run 25–45 (TPWL…IPML), 58–78 (IKYF…ILII), 94–114 (MMIM…FWLP), 146–166 (MSSF…MGGL), 174–194 (ILAY…TISE), 195–215 (NTWE…IFMF), 238–258 (FMMM…GFLP), 274–294 (LVLL…RISF), and 316–336 (VVAL…TSNF).

It belongs to the complex I subunit 2 family.

It localises to the mitochondrion inner membrane. The catalysed reaction is a ubiquinone + NADH + 5 H(+)(in) = a ubiquinol + NAD(+) + 4 H(+)(out). Core subunit of the mitochondrial membrane respiratory chain NADH dehydrogenase (Complex I) that is believed to belong to the minimal assembly required for catalysis. Complex I functions in the transfer of electrons from NADH to the respiratory chain. The immediate electron acceptor for the enzyme is believed to be ubiquinone. In Locusta migratoria (Migratory locust), this protein is NADH-ubiquinone oxidoreductase chain 2 (ND2).